We begin with the raw amino-acid sequence, 331 residues long: Polyprenyl transferase mpaA' (331 aa).

Helical transmembrane passes span 27 to 47, 56 to 76, 127 to 147, 159 to 179, 190 to 210, 240 to 260, 264 to 284, and 295 to 315; these read MPYY…ALKL, IEFI…LCGA, LILD…SIML, VFVY…ITGW, GDII…CVYF, LFLA…ISTI, WLWV…IAQF, and IHWD…VEVG.

It belongs to the UbiA prenyltransferase family. The cofactor is Mg(2+).

It localises to the golgi apparatus membrane. The catalysed reaction is 5,7-dihydroxy-4-methylphthalide + (2E,6E)-farnesyl diphosphate = 4-farnesyl-3,5-dihydroxy-6-methylphthalide + diphosphate. The protein operates within secondary metabolite biosynthesis; terpenoid biosynthesis. In terms of biological role, polyprenyl transferase; part of the gene cluster that mediates the biosynthesis of mycophenolic acid (MPA), the first isolated antibiotic natural product in the world obtained from a culture of Penicillium brevicompactum in 1893. MpaA' is a Golgi apparatus-associated enzyme that catalyzes the prenylation of 5,7-dihydroxy-4,6-dimethylphthalide (DHMP) to yield farnesyl-DHMP (FDHMP). The first step of the pathway is the synthesis of 5-methylorsellinic acid (5MOA) by the cytosolic polyketide synthase mpaC. 5MOA is then converted to the phthalide compound 5,7-dihydroxy-4,6-dimethylphthalide (DHMP) by the endoplasmic reticulum-bound cytochrome P450 monooxygenase mpaDE. MpaDE first catalyzes hydroxylation of 5-MOA to 4,6-dihydroxy-2-(hydroxymethyl)-3-methylbenzoic acid (DHMB). MpaDE then acts as a lactone synthase that catalyzes the ring closure to convert DHMB into DHMP. The next step is the prenylation of DHMP by the Golgi apparatus-associated prenyltransferase mpaA to yield farnesyl-DHMP (FDHMP). The ER-bound oxygenase mpaB then mediates the oxidative cleavage the C19-C20 double bond in FDHMP to yield FDHMP-3C via a mycophenolic aldehyde intermediate. The O-methyltransferase mpaG catalyzes the methylation of FDHMP-3C to yield MFDHMP-3C. After the cytosolic methylation of FDHMP-3C, MFDHMP-3C enters into peroxisomes probably via free diffusion due to its low molecular weight. Upon a peroxisomal CoA ligation reaction, catalyzed by a beta-oxidation component enzyme acyl-CoA ligase ACL891, MFDHMP-3C-CoA would then be restricted to peroxisomes for the following beta-oxidation pathway steps. The peroxisomal beta-oxidation machinery than converts MFDHMP-3C-CoA into MPA_CoA, via a beta-oxidation chain-shortening process. Finally mpaH acts as a peroxisomal acyl-CoA hydrolase with high substrate specificity toward MPA-CoA to release the final product MPA. The protein is Polyprenyl transferase mpaA' of Penicillium brevicompactum.